A 315-amino-acid chain; its full sequence is O-antigen chain rhamnosyltransferase WbaN (315 aa).

This sequence belongs to the glycosyltransferase 2 family.

It catalyses the reaction alpha-D-galactosyl-di-trans,octa-cis-undecaprenyl diphosphate + dTDP-beta-L-rhamnose = alpha-L-rhamnosyl-(1-&gt;3)-alpha-D-galactosyl-1-diphospho-di-trans,octa-cis-undecaprenol + dTDP + H(+). Its pathway is bacterial outer membrane biogenesis; LPS O-antigen biosynthesis. Rhamnosyltransferase involved in the biosynthesis of the repeat unit of the lipopolysaccharide (LPS) O-antigen region. Catalyzes the addition of a rhamnose to the galactosyl-undecaprenyl diphosphate intermediate. In Salmonella anatum, this protein is O-antigen chain rhamnosyltransferase WbaN.